Consider the following 173-residue polypeptide: Aliphatic sulfonate oxidoreductase, polyferredoxin-like subunit (173 aa).

4Fe-4S ferredoxin-type domains follow at residues isoleucine 9 to alanine 40, leucine 48 to lysine 80, and glycine 82 to glycine 111. The [4Fe-4S] cluster site is built by cysteine 18, cysteine 21, cysteine 24, cysteine 28, cysteine 58, cysteine 61, cysteine 66, cysteine 70, cysteine 91, cysteine 94, cysteine 97, cysteine 101, cysteine 118, cysteine 121, cysteine 127, and cysteine 131.

As to quaternary structure, heterodimer composed of a small WOR5-S subunit, with four [4Fe-4S] clusters, and a large WOR5-L subunit, containing the active site tungsto-bispyranopterin cofactor as well as another [4Fe-4S] cluster. It depends on [4Fe-4S] cluster as a cofactor.

It localises to the cytoplasm. In terms of biological role, polyferredoxin-like subunit of an oxidoreductase that can desulfonate and oxidize aliphatic sulfonates such as taurine. May serve as a an electron-transfer subunit between the catalytic subunit and ferredoxin. The polypeptide is Aliphatic sulfonate oxidoreductase, polyferredoxin-like subunit (Pyrococcus furiosus (strain ATCC 43587 / DSM 3638 / JCM 8422 / Vc1)).